Consider the following 414-residue polypeptide: Dihydroorotase (414 aa).

Zn(2+) contacts are provided by histidine 57 and histidine 59. Substrate-binding positions include 59 to 61 (HLR) and asparagine 91. Residues lysine 135, histidine 164, histidine 204, and aspartate 272 each coordinate Zn(2+). N6-carboxylysine is present on lysine 135. Aspartate 272 is a catalytic residue. Substrate is bound by residues histidine 276 and 286-287 (AG).

Belongs to the metallo-dependent hydrolases superfamily. DHOase family. Class I DHOase subfamily. Requires Zn(2+) as cofactor.

The catalysed reaction is (S)-dihydroorotate + H2O = N-carbamoyl-L-aspartate + H(+). It participates in pyrimidine metabolism; UMP biosynthesis via de novo pathway; (S)-dihydroorotate from bicarbonate: step 3/3. In terms of biological role, catalyzes the reversible cyclization of carbamoyl aspartate to dihydroorotate. The polypeptide is Dihydroorotase (Pyrococcus furiosus (strain ATCC 43587 / DSM 3638 / JCM 8422 / Vc1)).